The following is a 394-amino-acid chain: Ribulose bisphosphate carboxylase large chain (394 aa).

Lysine 5 is subject to N6,N6,N6-trimethyllysine. Substrate contacts are provided by asparagine 114 and threonine 164. Lysine 166 functions as the Proton acceptor in the catalytic mechanism. Lysine 168 is a binding site for substrate. Residues lysine 192, aspartate 194, and glutamate 195 each coordinate Mg(2+). Lysine 192 carries the N6-carboxylysine modification. Histidine 285 functions as the Proton acceptor in the catalytic mechanism. Substrate contacts are provided by arginine 286, histidine 318, and serine 370.

The protein belongs to the RuBisCO large chain family. Type I subfamily. In terms of assembly, heterohexadecamer of 8 large chains and 8 small chains. Mg(2+) is required as a cofactor.

Its subcellular location is the plastid. It is found in the chloroplast. The catalysed reaction is 2 (2R)-3-phosphoglycerate + 2 H(+) = D-ribulose 1,5-bisphosphate + CO2 + H2O. It carries out the reaction D-ribulose 1,5-bisphosphate + O2 = 2-phosphoglycolate + (2R)-3-phosphoglycerate + 2 H(+). RuBisCO catalyzes two reactions: the carboxylation of D-ribulose 1,5-bisphosphate, the primary event in carbon dioxide fixation, as well as the oxidative fragmentation of the pentose substrate in the photorespiration process. Both reactions occur simultaneously and in competition at the same active site. This is Ribulose bisphosphate carboxylase large chain (rbcL) from Euryale ferox (Gorgon plant).